We begin with the raw amino-acid sequence, 451 residues long: Methionine aminopeptidase 2-2 (451 aa).

A disordered region spans residues 1 to 97 (MAAQVEDDVA…PRVLISDLFP (97 aa)). Residues 19 to 28 (TKPTNGTSQP) are compositionally biased toward polar residues. Positions 35–45 (EAEDSDDDAEG) are enriched in acidic residues. Residues 60 to 73 (KKKKKRKPRKKKKA) are compositionally biased toward basic residues. Residues 74–83 (GTSATAGAKS) are compositionally biased toward low complexity. Residue His-204 participates in substrate binding. A divalent metal cation-binding residues include Asp-224, Asp-235, and His-304. His-312 serves as a coordination point for substrate. The a divalent metal cation site is built by Glu-337 and Glu-432.

It belongs to the peptidase M24A family. Methionine aminopeptidase eukaryotic type 2 subfamily. The cofactor is Co(2+). It depends on Zn(2+) as a cofactor. Mn(2+) serves as cofactor. Fe(2+) is required as a cofactor.

Its subcellular location is the cytoplasm. It catalyses the reaction Release of N-terminal amino acids, preferentially methionine, from peptides and arylamides.. Functionally, cotranslationally removes the N-terminal methionine from nascent proteins. The N-terminal methionine is often cleaved when the second residue in the primary sequence is small and uncharged (Met-Ala-, Cys, Gly, Pro, Ser, Thr, or Val). The sequence is that of Methionine aminopeptidase 2-2 from Leptosphaeria maculans (strain JN3 / isolate v23.1.3 / race Av1-4-5-6-7-8) (Blackleg fungus).